We begin with the raw amino-acid sequence, 219 residues long: Protein RhiB (219 aa).

Residues 174-195 (AGISQQGNAAGTSISSKSTGSP) are compositionally biased toward polar residues. Positions 174–201 (AGISQQGNAAGTSISSKSTGSPENPART) are disordered.

May be involved in plant-microbe interaction. The protein is Protein RhiB (rhiB) of Rhizobium leguminosarum bv. viciae.